The following is a 213-amino-acid chain: ATP-dependent Clp protease proteolytic subunit (213 aa).

The active-site Nucleophile is S114. Residue H139 is part of the active site.

This sequence belongs to the peptidase S14 family. Fourteen ClpP subunits assemble into 2 heptameric rings which stack back to back to give a disk-like structure with a central cavity, resembling the structure of eukaryotic proteasomes.

The protein localises to the cytoplasm. It catalyses the reaction Hydrolysis of proteins to small peptides in the presence of ATP and magnesium. alpha-casein is the usual test substrate. In the absence of ATP, only oligopeptides shorter than five residues are hydrolyzed (such as succinyl-Leu-Tyr-|-NHMec, and Leu-Tyr-Leu-|-Tyr-Trp, in which cleavage of the -Tyr-|-Leu- and -Tyr-|-Trp bonds also occurs).. Functionally, cleaves peptides in various proteins in a process that requires ATP hydrolysis. Has a chymotrypsin-like activity. Plays a major role in the degradation of misfolded proteins. In Pseudomonas putida (strain ATCC 47054 / DSM 6125 / CFBP 8728 / NCIMB 11950 / KT2440), this protein is ATP-dependent Clp protease proteolytic subunit.